The following is a 392-amino-acid chain: uncharacterized protein (392 aa).

In terms of domain architecture, J spans Thr7 to Glu76. At Ser108 the chain carries Phosphoserine.

This is an uncharacterized protein from Schizosaccharomyces pombe (strain 972 / ATCC 24843) (Fission yeast).